The following is a 312-amino-acid chain: Aspartate carbamoyltransferase catalytic subunit (312 aa).

The carbamoyl phosphate site is built by arginine 55 and threonine 56. L-aspartate is bound at residue lysine 83. 3 residues coordinate carbamoyl phosphate: arginine 105, histidine 133, and glutamine 136. Residues arginine 166 and arginine 220 each coordinate L-aspartate. Glycine 261 and proline 262 together coordinate carbamoyl phosphate.

The protein belongs to the aspartate/ornithine carbamoyltransferase superfamily. ATCase family. As to quaternary structure, heterododecamer (2C3:3R2) of six catalytic PyrB chains organized as two trimers (C3), and six regulatory PyrI chains organized as three dimers (R2).

It carries out the reaction carbamoyl phosphate + L-aspartate = N-carbamoyl-L-aspartate + phosphate + H(+). Its pathway is pyrimidine metabolism; UMP biosynthesis via de novo pathway; (S)-dihydroorotate from bicarbonate: step 2/3. Its function is as follows. Catalyzes the condensation of carbamoyl phosphate and aspartate to form carbamoyl aspartate and inorganic phosphate, the committed step in the de novo pyrimidine nucleotide biosynthesis pathway. This is Aspartate carbamoyltransferase catalytic subunit from Prosthecochloris aestuarii (strain DSM 271 / SK 413).